The sequence spans 214 residues: MSDETTVGGEAPAEKDDARHAMKMAKKKAAREKIMATKTDEKGLIIVNTGKGKGKSTAGFGMIFRHIAHGMPCAVVQFIKGAMATGERELIEKHFGDVCQFYTLGEGFTWETQDRARDVAMAEKAWEKAKELIRDERNSMVLLDEINIALRYDYIDVAEVVRFLKEEKPHMTHVVLTGRNAKEDLIEVADLVTEMELIKHPFRSGIKAQQGVEF.

Residue 50–56 (GKGKGKS) coordinates ATP.

The protein belongs to the Cob(I)alamin adenosyltransferase family. Monomer. Mn(2+) is required as a cofactor.

It is found in the cytoplasm. The enzyme catalyses 2 cob(II)yrinate a,c diamide + reduced [electron-transfer flavoprotein] + 2 ATP = 2 adenosylcob(III)yrinate a,c-diamide + 2 triphosphate + oxidized [electron-transfer flavoprotein] + 3 H(+). The catalysed reaction is 2 cob(II)alamin + reduced [electron-transfer flavoprotein] + 2 ATP = 2 adenosylcob(III)alamin + 2 triphosphate + oxidized [electron-transfer flavoprotein] + 3 H(+). It functions in the pathway cofactor biosynthesis; adenosylcobalamin biosynthesis; adenosylcobalamin from cob(II)yrinate a,c-diamide: step 2/7. In terms of biological role, required for both de novo synthesis of the corrin ring for the assimilation of exogenous corrinoids. Participates in the adenosylation of a variety of incomplete and complete corrinoids. This is Corrinoid adenosyltransferase (cobO) from Sinorhizobium sp.